Consider the following 350-residue polypeptide: Cytosolic sulfotransferase 18 (350 aa).

Met1 bears the N-acetylmethionine mark. Positions 1-17 (MESETLTAKATITTTTL) are enriched in low complexity. The tract at residues 1 to 28 (MESETLTAKATITTTTLPSHDETKTEST) is disordered. The segment covering 19–28 (SHDETKTEST) has biased composition (basic and acidic residues). Residue 93 to 98 (KTGTTW) participates in 3'-phosphoadenylyl sulfate binding. The Proton acceptor role is filled by His155. 3'-phosphoadenylyl sulfate contacts are provided by residues Arg177, Ser185, Tyr243, and 313–315 (RKG).

Belongs to the sulfotransferase 1 family. As to expression, expressed in roots, leaves and stems. Barely detected in siliques and flowers.

The protein resides in the cytoplasm. It catalyses the reaction an aliphatic (Z)-desulfo-glucosinolate + 3'-phosphoadenylyl sulfate = a (Z)-omega-(methylsulfanyl)-N-sulfo-alkylhydroximate S-glucoside + adenosine 3',5'-bisphosphate + H(+). With respect to regulation, inhibited by phosphoadenosine 5'-phosphate (PAP). Its function is as follows. Sulfotransferase that utilizes 3'-phospho-5'-adenylyl sulfate (PAPS) as sulfonate donor to catalyze the sulfate conjugation of desulfo-glucosinolates (dsGSs), the final step in the biosynthesis of the glucosinolate core structure. Preferred substrate are the long-chain desulfo-glucosinolates, 7-methylthioheptyl and 8-methylthiooctyl, derived from methionine. Substrate preference is desulfo-benzyl glucosinolate &gt; desulfo-4-methylthiobutyl glucosinolate &gt; desulfo-6-methylthiohexyl glucosinolate &gt; desulfo-3-methylthiopropyl glucosinolate &gt; desulfo-indol-3-yl methyl glucosinolate &gt; desulfo-singrin &gt; desulfo-3-butenyl glucosinolate. The chain is Cytosolic sulfotransferase 18 (SOT18) from Arabidopsis thaliana (Mouse-ear cress).